Here is a 154-residue protein sequence, read N- to C-terminus: Endoribonuclease YbeY (154 aa).

Residues His-113, His-117, and His-123 each coordinate Zn(2+).

This sequence belongs to the endoribonuclease YbeY family. Zn(2+) is required as a cofactor.

Its subcellular location is the cytoplasm. In terms of biological role, single strand-specific metallo-endoribonuclease involved in late-stage 70S ribosome quality control and in maturation of the 3' terminus of the 16S rRNA. The sequence is that of Endoribonuclease YbeY from Aeromonas salmonicida (strain A449).